Here is a 121-residue protein sequence, read N- to C-terminus: Small ribosomal subunit protein bS6 (121 aa).

This sequence belongs to the bacterial ribosomal protein bS6 family.

Functionally, binds together with bS18 to 16S ribosomal RNA. The polypeptide is Small ribosomal subunit protein bS6 (Pelagibacter ubique (strain HTCC1062)).